The chain runs to 540 residues: Chaperonin GroEL (540 aa).

Residues 29–32 (TLGP), 86–90 (DGTTT), Gly-413, 476–478 (NAA), and Asp-492 contribute to the ATP site.

Belongs to the chaperonin (HSP60) family. Forms a cylinder of 14 subunits composed of two heptameric rings stacked back-to-back. Interacts with the co-chaperonin GroES.

It localises to the cytoplasm. The enzyme catalyses ATP + H2O + a folded polypeptide = ADP + phosphate + an unfolded polypeptide.. Together with its co-chaperonin GroES, plays an essential role in assisting protein folding. The GroEL-GroES system forms a nano-cage that allows encapsulation of the non-native substrate proteins and provides a physical environment optimized to promote and accelerate protein folding. This Streptococcus sanguinis protein is Chaperonin GroEL.